Consider the following 222-residue polypeptide: MINTKKEEGEEEKTMIKRGLFILFEGVDRVGKSTQVQSLTNHISNVQKLPTKSLRFPDRTTPIGQIINQYLQNATNMDDRALHLLFSSNRWEARDSILELLNNGTNIVVDRYSYSGVAYSAAKGIDFDWCYACEKGLPKPDLIFYLSMSSEDATKRGEYGGERYEKLEFQKKIKQIYEEKLVDDQWKIINANRSIDEISNEISSIFDSEFKKIQLTSIAKLE.

ATP is bound by residues 29-34 (RVGKST) and R111. Residues 146–170 (LSMSSEDATKRGEYGGERYEKLEFQ) are LID.

It belongs to the thymidylate kinase family. As to quaternary structure, homodimer. It depends on Mg(2+) as a cofactor.

The catalysed reaction is dTMP + ATP = dTDP + ADP. It functions in the pathway pyrimidine metabolism; dTTP biosynthesis. Catalyzes the phosphorylation of thymidine monophosphate (dTMP) to thymidine diphosphate (dTDP), the immediate precursor for the DNA building block dTTP, with ATP as the preferred phosphoryl donor in the presence of Mg(2+). The polypeptide is Thymidylate kinase (dtymk) (Dictyostelium discoideum (Social amoeba)).